The chain runs to 372 residues: MSNKDIRVVVGMSGGVDSSVTAHVLKEQGYDVIGIFMKNWDDTDENGVCTATEDYNDVIEVCNQIGIPYYAVNFEKEYWDKVFTYFLDEYKKGRTPNPDVMCNKEIKFKAFLDHAMNLGADYVATGHYARIHRHEDGHVEMLRGVDNNKDQTYFLNQLSQQQLSKVMFPIGDIEKSEVRRIAEEQGLVTAKKKDSTGICFIGEKNFKTFLSQYLPAQPGDMITLDGKKMGKHSGLMYYTIGQRHGLGIGGDGDPWFVVGKNLKDNVLYVEQGFHHDALYSDYLIASDYSFVNPEDNDLDQGFECTAKFRYRQKDTKVFVKRENDHALRVTFAEPVRAITPGQAVVFYQGDVCLGGATIDDVFKNEGQLNFVV.

Residues 11-18 and Met37 contribute to the ATP site; that span reads GMSGGVDS. Residues 97-99 form an interaction with target base in tRNA region; sequence NPD. Cys102 (nucleophile) is an active-site residue. The cysteines at positions 102 and 199 are disulfide-linked. Residue Gly126 coordinates ATP. The segment at 149–151 is interaction with tRNA; sequence KDQ. Cys199 acts as the Cysteine persulfide intermediate in catalysis. Residues 309–310 form an interaction with tRNA region; sequence RY.

The protein belongs to the MnmA/TRMU family.

The protein resides in the cytoplasm. The catalysed reaction is S-sulfanyl-L-cysteinyl-[protein] + uridine(34) in tRNA + AH2 + ATP = 2-thiouridine(34) in tRNA + L-cysteinyl-[protein] + A + AMP + diphosphate + H(+). Catalyzes the 2-thiolation of uridine at the wobble position (U34) of tRNA, leading to the formation of s(2)U34. This Staphylococcus aureus (strain Mu50 / ATCC 700699) protein is tRNA-specific 2-thiouridylase MnmA.